A 309-amino-acid polypeptide reads, in one-letter code: Vomeronasal type-1 receptor 46 (309 aa).

The Extracellular segment spans residues 1-20; that stretch reads MNKANIFCTDTNMKVILFSE. Residues 21–41 form a helical membrane-spanning segment; it reads VSVGISANSILFISHLCMFLG. The Cytoplasmic portion of the chain corresponds to 42–50; sequence ESRPKPIDL. Residues 51-71 form a helical membrane-spanning segment; that stretch reads YIAFFSLTHLMLLVTMGLIAV. The Extracellular portion of the chain corresponds to 72-85; the sequence is DMFMPGGRWDSTTC. C85 and C171 form a disulfide bridge. A helical transmembrane segment spans residues 86–106; the sequence is TFLMYLHIVLRGPTLCATCLL. At 107-134 the chain is on the cytoplasmic side; that stretch reads NVLWTITLSPRNSCLTKFKHKSPHHISG. The helical transmembrane segment at 135 to 155 threads the bilayer; that stretch reads AFLFLCVLYMSLSSELLSITA. The Extracellular portion of the chain corresponds to 156 to 192; it reads SLNLTSENFLYVSQSCSILPMSYSIKSMFSTKMAIRE. N158 is a glycosylation site (N-linked (GlcNAc...) asparagine). A helical membrane pass occupies residues 193 to 213; sequence AFLIGLMVLSSGYMVALLWSH. At 214 to 237 the chain is on the cytoplasmic side; that stretch reads KKQAQHLHSNSLSLKASPEQRATR. A helical membrane pass occupies residues 238-258; that stretch reads TIMLLMSFFVVFYILDSVIFY. Residues 259 to 267 lie on the Extracellular side of the membrane; the sequence is SRMKFKDDS. A helical transmembrane segment spans residues 268-288; it reads IFVCVQIIVSHSYVTVSPFVF. Residues 289–309 lie on the Cytoplasmic side of the membrane; sequence ICTEKHIIKFFWSLCGRIVNI.

The protein belongs to the G-protein coupled receptor 1 family.

It localises to the cell membrane. Functionally, putative pheromone receptor implicated in the regulation of social and reproductive behavior. This chain is Vomeronasal type-1 receptor 46 (Vmn1r46), found in Mus musculus (Mouse).